A 1003-amino-acid chain; its full sequence is Anoctamin-2 (1003 aa).

A disordered region spans residues 1 to 68; it reads MATPGPRDIP…PCGGESTRSS (68 aa). Residues 1 to 365 lie on the Cytoplasmic side of the membrane; sequence MATPGPRDIP…FGEKIGLYFA (365 aa). The segment covering 10–21 has biased composition (low complexity); the sequence is PLLPGSPRRLSP. A helical transmembrane segment spans residues 366–386; the sequence is WLGLYTSFLIPSSVIGVIVFL. The Extracellular portion of the chain corresponds to 387–434; it reads YGCATIEEDIPSREMCDQQNAFTMCPLCDKSCDYWNLSSACGTAQASH. Residue asparagine 422 is glycosylated (N-linked (GlcNAc...) asparagine). The chain crosses the membrane as a helical span at residues 435–455; it reads LFDNPATVFFSIFMALWATMF. The Cytoplasmic segment spans residues 456–538; that stretch reads LENWKRLQMR…KDRFPGYLMN (83 aa). Residues 539-559 traverse the membrane as a helical segment; the sequence is FASILFMIALTFSIVFGVIVY. The Extracellular portion of the chain corresponds to 560–582; it reads RITTAAALSLNKATRSNVRVTVT. A helical membrane pass occupies residues 583–603; sequence ATAVIINLVVILILDEIYGAV. The Cytoplasmic segment spans residues 604–623; that stretch reads AKWLTKIEVPKTEQTFEERL. Residues 624–644 traverse the membrane as a helical segment; it reads ILKAFLLKFVNAYSPIFYVAF. Over 645-748 the chain is Extracellular; sequence FKGRFVGRPG…YTGLTPEYME (104 aa). Residues 749-769 form a helical membrane-spanning segment; the sequence is MIIQFGFVTLFVASFPLAPVF. The Cytoplasmic segment spans residues 770-801; sequence ALLNNVIEVRLDAKKFVTELRRPDAVRTKDIG. A helical membrane pass occupies residues 802–822; sequence IWFDILSGIGKFSVISNAFVI. The Extracellular portion of the chain corresponds to 823–907; sequence AITSDFIPRL…QYWFILSARL (85 aa). Residues asparagine 841, asparagine 849, and asparagine 856 are each glycosylated (N-linked (GlcNAc...) asparagine). Residues 908 to 928 traverse the membrane as a helical segment; the sequence is AFVIIFQNLVMFLSVLVDWMI. The Cytoplasmic segment spans residues 929 to 1003; sequence PDIPTDISDQ…MSSGSQHTNV (75 aa). The tract at residues 961 to 1003 is disordered; that stretch reads MDEPALRSPGGGDRSRSRAASSAPSGQSQLGSMMSSGSQHTNV. A compositionally biased stretch (low complexity) spans 978–1003; the sequence is RAASSAPSGQSQLGSMMSSGSQHTNV. The DLG4 binding (PDZ) signature appears at 1001-1003; the sequence is TNV.

It belongs to the anoctamin family. In terms of assembly, homodimer. Component of a presynaptic protein complex recruited to specialized plasma membrane domains of photoreceptors. Interacts with DLG4 by its C-terminal region. As to expression, retina, especially in the photoreceptor synaptic terminals.

The protein localises to the cell membrane. The catalysed reaction is chloride(in) = chloride(out). Its activity is regulated as follows. Channel activity is repressed by chloride inhibitors; strongly by niflumic acid (NFA), partially by flufenamic acid (FFA), and only slightly by meclofenamic acid (MFA), 5-Nitro-2-(3-phenylpropylamino)benzoic acid (NPPB), 4-acetamido-4'-isothiocyanato-stilben-2,2'-disulfonate (SITS), and 4,4'-diisothiocyanatostilbene-2,2'-disulfonic acid (DIDS). Functionally, calcium-activated chloride channel (CaCC) which may play a role in olfactory signal transduction. Odorant molecules bind to odor-sensing receptors (OSRs), leading to an increase in calcium entry that activates CaCC current which amplifies the depolarization of the OSR cells, ANO2 seems to be the underlying chloride channel involved in this process. May mediate light perception amplification in retina. This Homo sapiens (Human) protein is Anoctamin-2 (ANO2).